A 617-amino-acid chain; its full sequence is Acyl-CoA dehydrogenase family member 11 (617 aa).

The tract at residues 1–47 (MHRIGNAVRMASSSSANATITARHTQYSHAKTGGFSQTGPTLHNPYK) is disordered. Over residues 11–22 (ASSSSANATITA) the composition is skewed to low complexity. Residues 23–41 (RHTQYSHAKTGGFSQTGPT) are compositionally biased toward polar residues. FAD contacts are provided by residues 206–215 (QWMTEKKGGS) and 241–243 (FSS). Ser215 contacts substrate. Residues Ser267 and Arg334 each contribute to the substrate site. Residues Arg359, 366–369 (QSKW), Glu437, Gly441, and 464–466 (EGT) each bind FAD.

The protein belongs to the acyl-CoA dehydrogenase family. As to quaternary structure, homotetramer; dimer of dimers.

Promotes adaption to elevated temperatures by regulating expression of the lipid desaturase, fat-7. Binds selectively and with high affinity to fatty acids with chain lengths from C10 to C12 and prevents them from activating fat-7 expression mediated by the nuclear hormone receptor nhr-49, leading to low levels of membrane lipid desaturation and membrane fluidity for adaption to heat. The chain is Acyl-CoA dehydrogenase family member 11 from Caenorhabditis elegans.